The sequence spans 105 residues: Small ribosomal subunit protein uS10 (105 aa).

Belongs to the universal ribosomal protein uS10 family. As to quaternary structure, part of the 30S ribosomal subunit.

Functionally, involved in the binding of tRNA to the ribosomes. This is Small ribosomal subunit protein uS10 from Francisella philomiragia subsp. philomiragia (strain ATCC 25017 / CCUG 19701 / FSC 153 / O#319-036).